A 166-amino-acid polypeptide reads, in one-letter code: MASGVAVSDGVIKVFNDMKVRKSSTPEEVKKRKKAVLFCLSEDKKNIILEEGKEILVGDVGQTVDDPYTTFVKMLPDKDCRYALYDATYETKESKKEDLVFIFWAPESAPLKSKMIYASSKDAIKKKLTGIKHELQANCYEEVKDRCTLAEKLGGSAVISLEGKPL.

Ala-2 bears the N-acetylalanine mark. Phosphoserine occurs at positions 3 and 8. The region spanning 4–153 is the ADF-H domain; sequence GVAVSDGVIK…KDRCTLAEKL (150 aa). Lys-13 is modified (N6-acetyllysine). Residue Thr-25 is modified to Phosphothreonine. The Nuclear localization signal signature appears at 30-34; sequence KKRKK. Residue Ser-41 is modified to Phosphoserine. Phosphotyrosine is present on Tyr-68. The residue at position 73 (Lys-73) is an N6-acetyllysine. A Glycyl lysine isopeptide (Lys-Gly) (interchain with G-Cter in SUMO2) cross-link involves residue Lys-132. Position 140 is a phosphotyrosine (Tyr-140). At Lys-144 the chain carries N6-acetyllysine. A Phosphoserine modification is found at Ser-156.

This sequence belongs to the actin-binding proteins ADF family. In terms of assembly, can bind G- and F-actin in a 1:1 ratio of cofilin to actin. It is a major component of intranuclear and cytoplasmic actin rods. Interacts with the subcortical maternal complex (SCMC) via interaction with TLE6 and NLRP5. Interacts with C9orf72. Post-translationally, inactivated by phosphorylation on Ser-3. Phosphorylated on Ser-3 in resting cells. Dephosphorylated by PDXP/chronophin; this restores its activity in promoting actin filament depolymerization. The phosphorylation of Ser-24 may prevent recognition of the nuclear localization signal. Phosphorylated via a ARRB1-RAC1-LIMK1-PAK1 cascade upon active ligand stimulation of atypical chemokine receptor ACKR2.

Its subcellular location is the nucleus matrix. It localises to the cytoplasm. The protein localises to the cytoskeleton. The protein resides in the cell projection. It is found in the ruffle membrane. Its subcellular location is the lamellipodium membrane. It localises to the lamellipodium. The protein localises to the growth cone. The protein resides in the axon. Binds to F-actin and exhibits pH-sensitive F-actin depolymerizing activity. Important for normal progress through mitosis and normal cytokinesis. In conjunction with the subcortical maternal complex (SCMC), plays an essential role for zygotes to progress beyond the first embryonic cell divisions via regulation of actin dynamics. Required for the centralization of the mitotic spindle and symmetric division of zygotes. Plays a role in the regulation of cell morphology and cytoskeletal organization in epithelial cells. Required for the up-regulation of atypical chemokine receptor ACKR2 from endosomal compartment to cell membrane, increasing its efficiency in chemokine uptake and degradation. Required for neural tube morphogenesis and neural crest cell migration. The chain is Cofilin-1 (Cfl1) from Rattus norvegicus (Rat).